We begin with the raw amino-acid sequence, 118 residues long: uncharacterized protein (118 aa).

The tract at residues 49–80 (SKEEHTTSAANLHPRKKKRMPPRRAEKNKAPN) is disordered. The segment covering 61–70 (HPRKKKRMPP) has biased composition (basic residues).

This is an uncharacterized protein from Saccharomyces cerevisiae (strain ATCC 204508 / S288c) (Baker's yeast).